The primary structure comprises 447 residues: Elongation factor 1-alpha (447 aa).

A tr-type G domain is found at 5–230 (KIHISIVVIG…DQINEPKRPS (226 aa)). The interval 14–21 (GHVDSGKS) is G1. Residue 14–21 (GHVDSGKS) participates in GTP binding. Lys55 carries the post-translational modification N6,N6-dimethyllysine. Positions 70 to 74 (GITID) are G2. Lys79 carries the N6,N6,N6-trimethyllysine modification. The interval 91-94 (DAPG) is G3. GTP is bound by residues 91-95 (DAPGH) and 153-156 (NKMD). The interval 153–156 (NKMD) is G4. Lys187 bears the N6,N6,N6-trimethyllysine mark. The tract at residues 194-196 (SGF) is G5. N6-methyllysine is present on Lys261. Position 289 is a 5-glutamyl glycerylphosphorylethanolamine (Glu289). Lys306 carries the N6,N6,N6-trimethyllysine modification. Glu362 carries the post-translational modification 5-glutamyl glycerylphosphorylethanolamine. Lys396 bears the N6,N6,N6-trimethyllysine mark.

The protein belongs to the TRAFAC class translation factor GTPase superfamily. Classic translation factor GTPase family. EF-Tu/EF-1A subfamily.

It localises to the cytoplasm. In terms of biological role, this protein promotes the GTP-dependent binding of aminoacyl-tRNA to the A-site of ribosomes during protein biosynthesis. The chain is Elongation factor 1-alpha from Hordeum vulgare (Barley).